The sequence spans 505 residues: UDP-N-acetylmuramyl-tripeptide synthetase (505 aa).

Serine 35 lines the UDP-N-acetyl-alpha-D-muramoyl-L-alanyl-D-glutamate pocket. 118 to 124 (GTDGKSS) contributes to the ATP binding site. Residues 163 to 164 (ST), threonine 190, and arginine 200 contribute to the UDP-N-acetyl-alpha-D-muramoyl-L-alanyl-D-glutamate site. The residue at position 232 (lysine 232) is an N6-carboxylysine.

This sequence belongs to the MurCDEF family. MurE subfamily. Post-translationally, carboxylation is probably crucial for Mg(2+) binding and, consequently, for the gamma-phosphate positioning of ATP.

It is found in the cytoplasm. Its pathway is cell wall biogenesis; peptidoglycan biosynthesis. Functionally, catalyzes the addition of an amino acid to the nucleotide precursor UDP-N-acetylmuramoyl-L-alanyl-D-glutamate (UMAG) in the biosynthesis of bacterial cell-wall peptidoglycan. This chain is UDP-N-acetylmuramyl-tripeptide synthetase, found in Borreliella afzelii (strain PKo) (Borrelia afzelii).